Consider the following 114-residue polypeptide: Cuticle protein CP1158 (114 aa).

Pyrrolidone carboxylic acid is present on Gln-1. Repeat copies occupy residues 1 to 17 (QVGYSGIVSPDGNNIQF), 26 to 43 (VLKGPSGIVTSDGKNLQL), 70 to 87 (SVVGPSGIVSPSGNVQFS), and 95 to 112 (VLVGPSGIVTKDGNNLQL).

In terms of tissue distribution, calcified shell.

The polypeptide is Cuticle protein CP1158 (Cancer pagurus (Rock crab)).